Here is a 178-residue protein sequence, read N- to C-terminus: Inorganic pyrophosphatase (178 aa).

Positions 30, 44, and 56 each coordinate substrate. Mg(2+) contacts are provided by D66, D71, and D103. Y142 contacts substrate.

Belongs to the PPase family. As to quaternary structure, homohexamer. Mg(2+) is required as a cofactor.

Its subcellular location is the cytoplasm. It catalyses the reaction diphosphate + H2O = 2 phosphate + H(+). Its function is as follows. Catalyzes the hydrolysis of inorganic pyrophosphate (PPi) forming two phosphate ions. The polypeptide is Inorganic pyrophosphatase (Xanthomonas axonopodis pv. citri (strain 306)).